The chain runs to 231 residues: MRFDIITLFPDFFTSPLQSGLLGKALDKQIAQVNLVNPRDFALDKHHRVDDEPYGGGVGMLLKPEPIFAAVESLEILPRREVVLMTPQGQPLSQPILRELATDFDQLVLICGHYEGVDERVTQYLVTREISLGDFVLTCGEIPALTVLNGVIRLLPGTVGKEESLKLESFEADLLDYPQYTRPALFRDWEVPAVLRSGNHQAIEQWRKQQQIERTKERRPDLWEKWTINNG.

Residues Gly-112 and 132–137 (LGDFVL) contribute to the S-adenosyl-L-methionine site.

It belongs to the RNA methyltransferase TrmD family. In terms of assembly, homodimer.

Its subcellular location is the cytoplasm. It carries out the reaction guanosine(37) in tRNA + S-adenosyl-L-methionine = N(1)-methylguanosine(37) in tRNA + S-adenosyl-L-homocysteine + H(+). Specifically methylates guanosine-37 in various tRNAs. This is tRNA (guanine-N(1)-)-methyltransferase from Gloeothece citriformis (strain PCC 7424) (Cyanothece sp. (strain PCC 7424)).